The primary structure comprises 515 residues: Putative myristoylated protein 118L (515 aa).

Residue Gly2 is the site of N-myristoyl glycine; by host attachment. The next 3 helical transmembrane spans lie at 188–208 (LSLA…VGGV), 214–234 (IIFP…FQWT), and 482–502 (WLLY…AFSS).

This sequence belongs to the IIV-6 118L/458R family.

The protein localises to the membrane. The chain is Putative myristoylated protein 118L from Acheta domesticus (House cricket).